The primary structure comprises 1096 residues: Cation-transporting ATPase 5 (1096 aa).

Topologically, residues 1–19 (MDSIELKQLVPENDSEPGT) are cytoplasmic. The chain crosses the membrane as a helical span at residues 20-41 (PRQLLFQHYDISNEETIGIKPF). Over 42–47 (KSIPAK) the chain is Lumenal. A helical transmembrane segment spans residues 48–70 (VYILRVTEILTLGLLHLILTWLP). Residues 71 to 193 (EFRLKWIEAP…LVSTKKSIVT (123 aa)) are Cytoplasmic-facing. Residues 194-216 (ILLNEVLHPFYLFQAVSVLIWLC) traverse the membrane as a helical segment. Residues 217 to 220 (DSFV) are Lumenal-facing. Residues 221-238 (FYSCCIVFISSYSIFLSV) form a helical membrane-spanning segment. The Cytoplasmic portion of the chain corresponds to 239–391 (KESKESENRI…NLRPSQLYLD (153 aa)). A helical transmembrane segment spans residues 392–412 (SMSFLKTMAILSFVSIVFIAI). The Lumenal segment spans residues 413 to 425 (YLNLYNASFGHVV). The chain crosses the membrane as a helical span at residues 426 to 447 (LRSLDVLTILVPPALPATLSVG). The Cytoplasmic portion of the chain corresponds to 448-895 (IANSIARLSR…SLILSHRCFQ (448 aa)). Asp-480 functions as the 4-aspartylphosphate intermediate in the catalytic mechanism. Mg(2+) contacts are provided by Asp-838 and Asp-842. Residues 896 to 915 (YMVLCAIVQFSGVFFLYLKN) form a helical membrane-spanning segment. Residues 916 to 922 (YNFNDNQ) lie on the Lumenal side of the membrane. The helical transmembrane segment at 923–940 (FLFMDLLIIFPLSAAMSY) threads the bilayer. Topologically, residues 941–958 (FDPAQNLTSNRPNSTLFG) are cytoplasmic. A helical membrane pass occupies residues 959–982 (KGRVKDLGIQSVLIWLSHGLLTLI). Residues 983–1003 (LHELNWVELPEWQLEKSNTKN) are Lumenal-facing. A helical transmembrane segment spans residues 1004-1026 (VLVTSIFLLSSLQYLGICIGINQ). At 1027 to 1040 (SSEFLSPIWKKKTY) the chain is on the cytoplasmic side. Residues 1041–1060 (VCLCTTIGLCNIYLCFANEN) traverse the membrane as a helical segment. Residues 1061 to 1075 (HIISRCLQITRLPTL) lie on the Lumenal side of the membrane. Residues 1076 to 1096 (YRFIILFMGVISCCLTSILNM) traverse the membrane as a helical segment.

This sequence belongs to the cation transport ATPase (P-type) (TC 3.A.3) family. Type V subfamily.

The protein resides in the endoplasmic reticulum membrane. It localises to the golgi apparatus membrane. It carries out the reaction ATP + H2O = ADP + phosphate + H(+). Its function is as follows. Plays a role in regulating calcium and manganese homeostasis responsible for cell cycle progression. This Schizosaccharomyces pombe (strain 972 / ATCC 24843) (Fission yeast) protein is Cation-transporting ATPase 5 (cta5).